The following is a 295-amino-acid chain: Cyclin-G1 (295 aa).

It belongs to the cyclin family. Cyclin G subfamily. High levels in skeletal muscle, ovary, kidney and colon.

It is found in the nucleus. Its function is as follows. May play a role in growth regulation. Is associated with G2/M phase arrest in response to DNA damage. May be an intermediate by which p53 mediates its role as an inhibitor of cellular proliferation. This Homo sapiens (Human) protein is Cyclin-G1 (CCNG1).